The chain runs to 601 residues: Probable HECT-type ubiquitin ligase-interacting protein creD (601 aa).

Disordered stretches follow at residues 374-397 (EVDP…GTLS) and 455-489 (SADY…DHDH). The span at 461 to 473 (PSSGSNSHSPASP) shows a compositional bias: low complexity. Residues 475 to 489 (LSRRPSDEGYHDHDH) are compositionally biased toward basic and acidic residues.

The protein belongs to the arrestin family. In terms of assembly, interacts with hulA.

Functionally, component of the regulatory network controlling carbon source utilization through ubiquitination and deubiquitination involving creA, creB, creC, creD and acrB. May be involved in signaling by recognizing appropriately phosphorylated substrates via its arrestin domains and then recruit a HECT-type ubiquitin ligase such as hulA, leading to ubiquitination of the substrate, providing a link between ubiquitination and phosphorylation in protein regulation and stability. The polypeptide is Probable HECT-type ubiquitin ligase-interacting protein creD (creD) (Neosartorya fischeri (strain ATCC 1020 / DSM 3700 / CBS 544.65 / FGSC A1164 / JCM 1740 / NRRL 181 / WB 181) (Aspergillus fischerianus)).